A 278-amino-acid chain; its full sequence is MYLRKALIAGGSAAAAAAAILGAAAVGKSKGGPDLDILSVVPAATGQWDRNWDRREPISMVNLSKINGETGEEELQLHLNKHKPKATRHIFLIRHSQYKQDGKTDFDRVLTPLGREQADLTGKRLSSLGFKYNHIVYSTMTRAKETTEIISKYLPDVKKSSSDLLREGAPIRPEPQVCHWKPDFVYYEDGSRIEAAFRHFIHRADPKQEADSYEILICHANVIRYIVCRALQLPPEAWLRMFLNNGSISYLVIRPNGNVSLRMLGDSGFMPPEKISRT.

The helical transmembrane segment at 7–27 threads the bilayer; that stretch reads LIAGGSAAAAAAAILGAAAVG.

The protein belongs to the phosphoglycerate mutase family. BPG-dependent PGAM subfamily. In terms of processing, phosphorylated by the RIPK1/RIPK3 complex under necrotic conditions. This phosphorylation increases PGAM5 phosphatase activity.

Its subcellular location is the mitochondrion outer membrane. The catalysed reaction is O-phospho-L-seryl-[protein] + H2O = L-seryl-[protein] + phosphate. It catalyses the reaction O-phospho-L-threonyl-[protein] + H2O = L-threonyl-[protein] + phosphate. Functionally, displays phosphatase activity for serine/threonine residues. Has apparently no phosphoglycerate mutase activity. May be regulator of mitochondrial dynamics. May be a central mediator for programmed necrosis. In Xenopus tropicalis (Western clawed frog), this protein is Serine/threonine-protein phosphatase PGAM5, mitochondrial (pgam5).